Consider the following 360-residue polypeptide: Farnesyl pyrophosphate synthase (360 aa).

K52, R55, and Q90 together coordinate isopentenyl diphosphate. Mg(2+) is bound by residues D97 and D101. R106 provides a ligand contact to dimethylallyl diphosphate. R107 provides a ligand contact to isopentenyl diphosphate. Dimethylallyl diphosphate contacts are provided by K194, T195, Q237, K254, and K263.

This sequence belongs to the FPP/GGPP synthase family. Requires Mg(2+) as cofactor.

The enzyme catalyses isopentenyl diphosphate + dimethylallyl diphosphate = (2E)-geranyl diphosphate + diphosphate. It carries out the reaction isopentenyl diphosphate + (2E)-geranyl diphosphate = (2E,6E)-farnesyl diphosphate + diphosphate. It functions in the pathway isoprenoid biosynthesis; farnesyl diphosphate biosynthesis; farnesyl diphosphate from geranyl diphosphate and isopentenyl diphosphate: step 1/1. It participates in isoprenoid biosynthesis; geranyl diphosphate biosynthesis; geranyl diphosphate from dimethylallyl diphosphate and isopentenyl diphosphate: step 1/1. In terms of biological role, farnesyl pyrophosphate synthase; part of the second module of ergosterol biosynthesis pathway that includes the middle steps of the pathway. The second module involves the formation of farnesyl diphosphate, which is also an important intermediate in the biosynthesis of ubiquinone, dolichol, heme and prenylated proteins. This module also plays a key role in the biosynthesis of triterpenes such as ganoderic acids (GA), a group of highly oxygenated lanostane-type triterpenoids which are well recognized as a main group of unique bioactive compounds in the medicinal mushroom Ganoderma lucidum. Activity by the mevalonate kinase first converts mevalonate into 5-phosphomevalonate. 5-phosphomevalonate is then further converted to 5-diphosphomevalonate by the phosphomevalonate kinase. The diphosphomevalonate decarboxylase MVD then produces isopentenyl diphosphate. The isopentenyl-diphosphate delta-isomerase then catalyzes the 1,3-allylic rearrangement of the homoallylic substrate isopentenyl (IPP) to its highly electrophilic allylic isomer, dimethylallyl diphosphate (DMAPP). Finally the farnesyl diphosphate synthase FPS catalyzes the sequential condensation of isopentenyl pyrophosphate with dimethylallyl pyrophosphate, and then with the resultant geranylpyrophosphate to the ultimate product farnesyl pyrophosphate. The polypeptide is Farnesyl pyrophosphate synthase (Ganoderma lucidum (Ling zhi medicinal fungus)).